The primary structure comprises 345 residues: Protein RecA (345 aa).

63-70 (GPESSGKT) is a binding site for ATP. A disordered region spans residues 326 to 345 (VLSDALMTDPEPDADGTPED). Positions 335-345 (PEPDADGTPED) are enriched in acidic residues.

Belongs to the RecA family.

The protein resides in the cytoplasm. Its function is as follows. Can catalyze the hydrolysis of ATP in the presence of single-stranded DNA, the ATP-dependent uptake of single-stranded DNA by duplex DNA, and the ATP-dependent hybridization of homologous single-stranded DNAs. It interacts with LexA causing its activation and leading to its autocatalytic cleavage. The sequence is that of Protein RecA from Gluconobacter oxydans (strain 621H) (Gluconobacter suboxydans).